A 219-amino-acid polypeptide reads, in one-letter code: Transmembrane emp24 domain-containing protein 10 (219 aa).

A signal peptide spans 1-31 (MSGLSGPPTRRGPFPLALLLLFLLGPSLVLA). The interval 1 to 142 (MSGLSGPPTR…KNYEEIAKVE (142 aa)) is required for interaction with STX17. The Lumenal segment spans residues 32–185 (ISFHLPINSR…RDTNESTNTR (154 aa)). One can recognise a GOLD domain in the interval 41-193 (RKCLREEIHK…TRVLYFSIFS (153 aa)). Residues R171 and R176 each carry the dimethylated arginine modification. An N-linked (GlcNAc...) asparagine glycan is attached at N179. The chain crosses the membrane as a helical span at residues 186–206 (VLYFSIFSMFCLIGLATWQVF). Residues 204 to 219 (QVFYLRRFFKAKKLIE) are interaction with COPG1. Residues 207–219 (YLRRFFKAKKLIE) are Cytoplasmic-facing. The interval 207 to 219 (YLRRFFKAKKLIE) is interaction with ARF1 and IL1B. The COPII vesicle coat-binding signature appears at 211 to 212 (FF). Positions 211–219 (FFKAKKLIE) match the COPI vesicle coat-binding motif.

It belongs to the EMP24/GP25L family. Predominantly dimeric and to a lesser extent monomeric in the ER. Monomer and dimer in ERGIC and cis-Golgi network. Forms homooligomer (via GOLD domain); the assembly is promoted by direct binding with leaderless cargos and may form a protein channel that facilitates cargo entry into the ERGIC. Forms heterooligomeric complexes with other members of the p24 family such as TMED2, TMED7 and TMED9. Interacts (via GOLD domain) with TMED2 (via GOLD domain); the complex is required for export of TMED10 from the ER to the cis-Golgi network; the complex is proposed to be involved in cis-Golgi network dynamics and / or biogenesis. Associates with the COPI vesicle coat subunits (coatomer). Tetramerization of the cytoplasmic domain at the Golgi membrane in vitro; the complex is proposed to interact with COPI coatomer and induce budding of the vesicles. Interacts with COPG1; the interaction involves TMED10 homodimer. Interacts with ARF1 (GDP-bound); the interaction probably involves a TMED10 oligomer. Interacts with SEC23A, SEC24B, SEC24C and SEC24D components of the coat protein complex II/COPII, indicative of an association of TMED10 with the COPII vesicle coat. Interacts with CD59. Interacts with MPPE1/PGAP5; the complex might recruit and sort GPI-anchored proteins to the ER-exit site, or the interaction might lead to recycling of PGAP5 between the ER and the Golgi. Interacts with F2LR1/PAR2. Interacts with KDELR2/ERD2; the interaction is disrupted by KDELR2 ligand. Found in a complex composed at least of SURF4, TMED2 and TMED10. Associates with the presenilin-dependent gamma-secretase complex. Interacts with STX17; the interaction is direct. Interacts with IL-1; the interaction is direct. Interacts with RAB21 (active GTP-bound form); the interaction is indirect and regulates TMED10 abundance and localization at the Golgi.

The protein localises to the endoplasmic reticulum membrane. It localises to the endoplasmic reticulum-Golgi intermediate compartment membrane. Its subcellular location is the golgi apparatus membrane. The protein resides in the golgi apparatus. It is found in the cis-Golgi network membrane. The protein localises to the trans-Golgi network membrane. It localises to the cytoplasmic vesicle. Its subcellular location is the secretory vesicle membrane. The protein resides in the cell membrane. It is found in the melanosome. Functionally, cargo receptor involved in protein vesicular trafficking and quality control in the endoplasmic reticulum (ER) and Golgi. The p24 protein family is a group of transmembrane proteins that bind coat protein complex I/COPI and coat protein complex II/COPII involved in vesicular trafficking between the membranes. Acts at the lumenal side for incorporation of secretory cargo molecules into transport vesicles and involved in vesicle coat formation at the cytoplasmic side. Mainly functions in the early secretory pathway and cycles between the ER, ER-Golgi intermediate compartment (ERGIC) and Golgi, mediating cargo transport through COPI and COPII-coated vesicles. In COPII vesicle-mediated anterograde transport, involved in the transport of GPI-anchored proteins by acting together with TMED2 as their cargo receptor; the function specifically implies SEC24C and SEC24D of the COPII vesicle coat and lipid raft-like microdomains of the ER. Recognizes GPI anchors structural remodeled in the ER by the GPI inositol-deacylase/PGAP1 and the metallophosphoesterase MPPE1/PGAP5. In COPI vesicle-mediated retrograde transport, involved in the biogenesis of COPI vesicles and vesicle coat recruitment. Involved in trafficking of amyloid beta A4 protein and soluble APP-beta release (independent from the modulation of gamma-secretase activity). Involved in the KDELR2-mediated retrograde transport of the toxin A subunit (CTX-A-K63)together with COPI and the COOH terminus of KDELR2. On Golgi membranes, acts as a primary receptor for ARF1-GDP, a GTP-binding protein involved in COPI-vesicle formation. Increases coatomer-dependent GTPase-activating activity of ARFGAP2 which mediates the hydrolysis of ARF1-bound GTP and therefore modulates protein trafficking from the Golgi apparatus. Involved in the exocytic trafficking of G protein-coupled receptors F2LR1/PAR2 (trypsin and tryspin-like enzyme receptor), OPRM1 (opioid receptor) and P2RY4 (UTD and UDP receptor) from the Golgi to the plasma membrane, thus contributing to receptor resensitization. In addition to its cargo receptor activity, may also act as a protein channel after oligomerization, facilitating the post-translational entry of leaderless cytoplasmic cargo into the ERGIC. Involved in the translocation into ERGIC, the vesicle entry and the secretion of leaderless cargos (lacking the secretion signal sequence), including the mature form of interleukin 1/IL-1 family members, the alpha-crystallin B chain HSPB5, the carbohydrate-binding proteins galectin-1/LGALS1 and galectin-3/LGALS3, the microtubule-associated protein Tau/MAPT, and the annexin A1/ANXA1; the translocation process is dependent on cargo protein unfolding and enhanced by chaperones HSP90AB1 and HSP90B1/GRP9. Could also associates with the presenilin-dependent gamma-secretase complex in order to regulate gamma-cleavages of the amyloid beta A4 protein to yield amyloid-beta 40/Abeta40. This Pongo abelii (Sumatran orangutan) protein is Transmembrane emp24 domain-containing protein 10 (TMED10).